A 69-amino-acid chain; its full sequence is Antimicrobial peptide Eval36 (69 aa).

Residues 1 to 23 (MKAQFAILVISMMLLQLIVQTES) form the signal peptide. Leu-37 carries the leucine amide modification. Residues 38–69 (GKRGLRNLDDFQDFLDSDTSDADLRMLRDMFR) constitute a propeptide that is removed on maturation.

The protein belongs to the non-disulfide-bridged peptide (NDBP) superfamily. Short antimicrobial peptide (group 4) family. As to expression, expressed by the venom gland.

It is found in the secreted. In terms of biological role, probable antimicrobial peptide. Shows low inhibitory activity against herpes simplex virus type 1 (HSV-1). In Euscorpiops validus (Scorpion), this protein is Antimicrobial peptide Eval36.